Consider the following 434-residue polypeptide: MPVSARAGIVVTGTEVLTGRVQDANGPWIADRLLELGVELAHITICGDRPHDIEAQLRFLADQGVDLIVTSGGLGPTADDMTVEVVARFCGRELVLDAEVEEKIANILKKLMARNPAFQSALDPGTFESLRAANRKQAMVPAGAQVLDPVGTAPGVVVPGKPAVIVLPGPPRELQPMWHTAIQTPAAQQAIAGRTVYRQEMLRMFGLPESGLAETLREAEAAVPGFGQLEITTCLRRGEIEMVTRYEPTAATAYAQLTKLLRDKHGDQLYSEDGSRVDDLVARLLAGRRIATAESCTAGLLAARLTDRPGSSDYVAGGVVAYSNEAKAELLGVDPALIETHGAVSEPVAQAMAAGARQRFAADTAVAITGIAGPGGGTEEKPVGTVCFSVQVGPPGATARSDTRTLRLPGNRLDIRERSTTVAMHLLRRLLTDA.

Belongs to the CinA family.

In Mycobacterium avium (strain 104), this protein is CinA-like protein.